Consider the following 363-residue polypeptide: 5-formaminoimidazole-4-carboxamide-1-(beta)-D-ribofuranosyl 5'-monophosphate synthetase (363 aa).

The 5-amino-1-(5-phospho-beta-D-ribosyl)imidazole-4-carboxamide site is built by His-29 and Ser-96. Positions 118–354 (RDILRWEAER…ISREIKNAIE (237 aa)) constitute an ATP-grasp domain. Residues 148 to 210 (PEDI…TNFC) and Glu-232 each bind ATP. Residue Asn-260 participates in 5-amino-1-(5-phospho-beta-D-ribosyl)imidazole-4-carboxamide binding. Residues Gln-299 and Glu-312 each coordinate Mg(2+).

This sequence belongs to the phosphohexose mutase family. Mg(2+) is required as a cofactor. The cofactor is Mn(2+).

The enzyme catalyses 5-amino-1-(5-phospho-beta-D-ribosyl)imidazole-4-carboxamide + formate + ATP = 5-formamido-1-(5-phospho-D-ribosyl)imidazole-4-carboxamide + ADP + phosphate. Its pathway is purine metabolism; IMP biosynthesis via de novo pathway; 5-formamido-1-(5-phospho-D-ribosyl)imidazole-4-carboxamide from 5-amino-1-(5-phospho-D-ribosyl)imidazole-4-carboxamide (formate route): step 1/1. Functionally, catalyzes the ATP- and formate-dependent formylation of 5-aminoimidazole-4-carboxamide-1-beta-d-ribofuranosyl 5'-monophosphate (AICAR) to 5-formaminoimidazole-4-carboxamide-1-beta-d-ribofuranosyl 5'-monophosphate (FAICAR) in the absence of folates. In Methanosphaera stadtmanae (strain ATCC 43021 / DSM 3091 / JCM 11832 / MCB-3), this protein is 5-formaminoimidazole-4-carboxamide-1-(beta)-D-ribofuranosyl 5'-monophosphate synthetase.